The following is a 1785-amino-acid chain: Plexin-2 (1785 aa).

Residues 1–17 (MLPESVFLLLISHFLRA) form the signal peptide. Positions 18–444 (VTQPPFETEG…MPYGIILEEL (427 aa)) constitute a Sema domain. The Extracellular segment spans residues 18 to 1139 (VTQPPFETEG…SDHALPSRLS (1122 aa)). N66 carries an N-linked (GlcNAc...) asparagine glycan. Cystine bridges form between C84–C91, C118–C126, C247–C349, C263–C300, C318–C336, C447–C464, C453–C487, C456–C473, and C467–C479. N249 is a glycosylation site (N-linked (GlcNAc...) asparagine). Residues 446-488 (TCSHHSSCTECLVSVDPLCQWCHPTQSCTTSARCTSPVTSQCP) form the PSI 1 domain. N-linked (GlcNAc...) asparagine glycosylation is found at N502, N536, and N572. Residues C524 and C544 are joined by a disulfide bond. One can recognise a PSI 2 domain in the interval 577–617 (DCSGYGTCSSCMSSEYNCAWCSGLHKCSNSCGALEKSKACV). 2 N-linked (GlcNAc...) asparagine glycosylation sites follow: N679 and N702. Positions 707–748 (SCTNLASDCSSCLALSPSLSCGWCNRQCSHECHESKATAVCD) constitute a PSI 3 domain. IPT/TIG domains lie at 750 to 837 (PRID…LYSF), 840 to 924 (TSIF…PFEY), and 928 to 1040 (PSIS…LSPF). N864, N886, N984, and N1016 each carry an N-linked (GlcNAc...) asparagine glycan. The helical transmembrane segment at 1140–1160 (LLILGLLLFIVVTLTVMCLVF) threads the bilayer. Residues 1159-1197 (VFKRRRQEREKEYRKIQLQMENLENNVRKECKQAFAELQ) are a coiled coil. Over 1161-1785 (KRRRQEREKE…HIYSTISDYE (625 aa)) the chain is Cytoplasmic.

This sequence belongs to the plexin family. As to quaternary structure, interacts with mab-20. In terms of tissue distribution, expressed predominantly in the central nervous system from embryonic to adult stages. Expressed in early embryos in ventral neuroblasts. Expressed in neurons and in a subset of posterior lateral and ventral epidermal cells following epidermal enclosure. Present in neurons, muscles and weakly expressed in epidermal cells of the larval tail.

The protein resides in the cell membrane. Involved as a receptor for mab-20/sema-2a in the formation or stabilization of cell-cell contacts at several stages of epithelial morphogenesis. In early embryonic development, required for proper ventral closure of the epidermis. During male tail morphogenesis, involved in precursor cell sorting and in the formation of distinct sensory rays. Involved in axon guidance of SDQL neurons during neurogenesis. Probably in response to stimulation by mab-20, regulates fln-1-mediated remodeling of the actin cytoskeleton and thus axon guidance and/or fasciculation of DD/VD neurons. This chain is Plexin-2, found in Caenorhabditis elegans.